We begin with the raw amino-acid sequence, 224 residues long: LexA repressor (224 aa).

The segment at residues 31–51 is a DNA-binding region (H-T-H motif); that stretch reads RAEIAAELGFKSANAAEEHLQ. Catalysis depends on for autocatalytic cleavage activity residues Ser-142 and Lys-179.

It belongs to the peptidase S24 family. Homodimer.

It catalyses the reaction Hydrolysis of Ala-|-Gly bond in repressor LexA.. Represses a number of genes involved in the response to DNA damage (SOS response), including recA and lexA. In the presence of single-stranded DNA, RecA interacts with LexA causing an autocatalytic cleavage which disrupts the DNA-binding part of LexA, leading to derepression of the SOS regulon and eventually DNA repair. The protein is LexA repressor of Verminephrobacter eiseniae (strain EF01-2).